Reading from the N-terminus, the 207-residue chain is Guanylate kinase (207 aa).

The region spanning 4 to 184 (GTLYIVSAPS…ALTDLKTIIR (181 aa)) is the Guanylate kinase-like domain. Residue 11–18 (APSGAGKS) coordinates ATP.

It belongs to the guanylate kinase family.

It is found in the cytoplasm. It catalyses the reaction GMP + ATP = GDP + ADP. Functionally, essential for recycling GMP and indirectly, cGMP. The protein is Guanylate kinase of Escherichia coli O157:H7.